The primary structure comprises 180 residues: NAD(P)H-quinone oxidoreductase subunit I, chloroplastic (180 aa).

2 4Fe-4S ferredoxin-type domains span residues 55–84 (GRIH…VDWR) and 95–124 (LNYS…MTEE). [4Fe-4S] cluster-binding residues include Cys-64, Cys-67, Cys-70, Cys-74, Cys-104, Cys-107, Cys-110, and Cys-114.

The protein belongs to the complex I 23 kDa subunit family. In terms of assembly, NDH is composed of at least 16 different subunits, 5 of which are encoded in the nucleus. [4Fe-4S] cluster serves as cofactor.

The protein resides in the plastid. It is found in the chloroplast thylakoid membrane. The enzyme catalyses a plastoquinone + NADH + (n+1) H(+)(in) = a plastoquinol + NAD(+) + n H(+)(out). The catalysed reaction is a plastoquinone + NADPH + (n+1) H(+)(in) = a plastoquinol + NADP(+) + n H(+)(out). NDH shuttles electrons from NAD(P)H:plastoquinone, via FMN and iron-sulfur (Fe-S) centers, to quinones in the photosynthetic chain and possibly in a chloroplast respiratory chain. The immediate electron acceptor for the enzyme in this species is believed to be plastoquinone. Couples the redox reaction to proton translocation, and thus conserves the redox energy in a proton gradient. This Illicium oligandrum (Star anise) protein is NAD(P)H-quinone oxidoreductase subunit I, chloroplastic.